The following is a 391-amino-acid chain: Digeranylgeranylglycerophospholipid reductase (391 aa).

Residues G19, D38, C49, A50, A52, R99, V123, D279, G291, and I292 each coordinate FAD. V369 is a binding site for a 2,3-bis-O-(geranylgeranyl)-sn-glycerol 1-phospholipid.

It belongs to the geranylgeranyl reductase family. DGGGPL reductase subfamily. FAD is required as a cofactor.

It carries out the reaction a 2,3-bis-O-phytanyl-sn-glycerol 1-phospholipid + 8 A = a 2,3-bis-O-(geranylgeranyl)-sn-glycerol 1-phospholipid + 8 AH2. It catalyses the reaction 2,3-bis-O-(phytanyl)-sn-glycerol 1-phosphate + 8 A = 2,3-bis-O-(geranylgeranyl)-sn-glycerol 1-phosphate + 8 AH2. The catalysed reaction is CDP-2,3-bis-O-(geranylgeranyl)-sn-glycerol + 8 AH2 = CDP-2,3-bis-O-(phytanyl)-sn-glycerol + 8 A. The enzyme catalyses archaetidylserine + 8 AH2 = 2,3-bis-O-phytanyl-sn-glycero-3-phospho-L-serine + 8 A. The protein operates within membrane lipid metabolism; glycerophospholipid metabolism. Is involved in the reduction of 2,3-digeranylgeranylglycerophospholipids (unsaturated archaeols) into 2,3-diphytanylglycerophospholipids (saturated archaeols) in the biosynthesis of archaeal membrane lipids. Catalyzes the formation of archaetidic acid (2,3-di-O-phytanyl-sn-glyceryl phosphate) from 2,3-di-O-geranylgeranylglyceryl phosphate (DGGGP) via the hydrogenation of each double bond of the isoprenoid chains. Is also probably able to reduce double bonds of geranyl groups in CDP-2,3-bis-O-(geranylgeranyl)-sn-glycerol and archaetidylserine, thus acting at various stages in the biosynthesis of archaeal membrane lipids. In Methanococcus aeolicus (strain ATCC BAA-1280 / DSM 17508 / OCM 812 / Nankai-3), this protein is Digeranylgeranylglycerophospholipid reductase.